A 105-amino-acid chain; its full sequence is Thioredoxin (105 aa).

One can recognise a Thioredoxin domain in the interval methionine 1–isoleucine 105. Residues cysteine 30 and cysteine 33 are joined by a disulfide bond.

Belongs to the thioredoxin family.

Functionally, component of the thioredoxin-thioredoxin reductase system. Participates in various redox reactions through the reversible oxidation of its active center dithiol to a disulfide and catalyzes dithiol-disulfide exchange reactions. The polypeptide is Thioredoxin (trxA) (Rickettsia typhi (strain ATCC VR-144 / Wilmington)).